Consider the following 540-residue polypeptide: CTP synthase (540 aa).

The amidoligase domain stretch occupies residues 1 to 270 (MNNLTSTKFI…DTQILKHFNI (270 aa)). S18 serves as a coordination point for CTP. S18 contacts UTP. ATP contacts are provided by residues 19-24 (SLGKGL) and D76. Residues D76 and E144 each coordinate Mg(2+). CTP-binding positions include 151-153 (DIE), 191-196 (KTKPTQ), and K227. Residues 191 to 196 (KTKPTQ) and K227 contribute to the UTP site. In terms of domain architecture, Glutamine amidotransferase type-1 spans 295 to 537 (TIAIIGKYIK…VQASLNYQET (243 aa)). Residue G356 coordinates L-glutamine. C383 (nucleophile; for glutamine hydrolysis) is an active-site residue. Residues 384-387 (MGMQ), E407, and R462 each bind L-glutamine. Catalysis depends on residues H510 and E512.

This sequence belongs to the CTP synthase family. As to quaternary structure, homotetramer.

It catalyses the reaction UTP + L-glutamine + ATP + H2O = CTP + L-glutamate + ADP + phosphate + 2 H(+). It carries out the reaction L-glutamine + H2O = L-glutamate + NH4(+). The catalysed reaction is UTP + NH4(+) + ATP = CTP + ADP + phosphate + 2 H(+). It functions in the pathway pyrimidine metabolism; CTP biosynthesis via de novo pathway; CTP from UDP: step 2/2. Its activity is regulated as follows. Allosterically activated by GTP, when glutamine is the substrate; GTP has no effect on the reaction when ammonia is the substrate. The allosteric effector GTP functions by stabilizing the protein conformation that binds the tetrahedral intermediate(s) formed during glutamine hydrolysis. Inhibited by the product CTP, via allosteric rather than competitive inhibition. In terms of biological role, catalyzes the ATP-dependent amination of UTP to CTP with either L-glutamine or ammonia as the source of nitrogen. Regulates intracellular CTP levels through interactions with the four ribonucleotide triphosphates. This chain is CTP synthase, found in Ehrlichia ruminantium (strain Welgevonden).